A 263-amino-acid polypeptide reads, in one-letter code: tRNA1(Val) (adenine(37)-N6)-methyltransferase (263 aa).

The protein belongs to the methyltransferase superfamily. tRNA (adenine-N(6)-)-methyltransferase family.

The protein resides in the cytoplasm. It carries out the reaction adenosine(37) in tRNA1(Val) + S-adenosyl-L-methionine = N(6)-methyladenosine(37) in tRNA1(Val) + S-adenosyl-L-homocysteine + H(+). In terms of biological role, specifically methylates the adenine in position 37 of tRNA(1)(Val) (anticodon cmo5UAC). The protein is tRNA1(Val) (adenine(37)-N6)-methyltransferase of Pseudoalteromonas atlantica (strain T6c / ATCC BAA-1087).